The sequence spans 212 residues: MTMGLVGQKVGMTRIFDEEGTASAVTVIEIQPNIISQIKTDETDGYHAVQVSVGHRKSSRTTKALAGHFAKANISAAALVKEFRVDSEEIAKYEVGKPVELAIFEQGQRVDVRARSIGKGYAGTIKRHNFRGQRKTHGNSVSHRVPGSIGQNQTPGRVFKGKKMSGHMGNKMCSVQNIEIARIDVERNLLLLKGSVPGAKGGYVVIRPSVKA.

Residues 134 to 154 (RKTHGNSVSHRVPGSIGQNQT) form a disordered region. Q153 bears the N5-methylglutamine mark.

Belongs to the universal ribosomal protein uL3 family. In terms of assembly, part of the 50S ribosomal subunit. Forms a cluster with proteins L14 and L19. Post-translationally, methylated by PrmB.

Its function is as follows. One of the primary rRNA binding proteins, it binds directly near the 3'-end of the 23S rRNA, where it nucleates assembly of the 50S subunit. In Dichelobacter nodosus (strain VCS1703A), this protein is Large ribosomal subunit protein uL3.